A 451-amino-acid polypeptide reads, in one-letter code: Tubulin beta-1 chain (451 aa).

Residues Q11, E73, S142, G146, T147, G148, N208, and N230 each contribute to the GTP site. E73 contributes to the Mg(2+) binding site. A disordered region spans residues 430 to 451; sequence QEATADDEAEFEEEGEVEGEYA. Residues 433-451 show a composition bias toward acidic residues; that stretch reads TADDEAEFEEEGEVEGEYA.

The protein belongs to the tubulin family. As to quaternary structure, dimer of alpha and beta chains. A typical microtubule is a hollow water-filled tube with an outer diameter of 25 nm and an inner diameter of 15 nM. Alpha-beta heterodimers associate head-to-tail to form protofilaments running lengthwise along the microtubule wall with the beta-tubulin subunit facing the microtubule plus end conferring a structural polarity. Microtubules usually have 13 protofilaments but different protofilament numbers can be found in some organisms and specialized cells. The cofactor is Mg(2+).

The protein localises to the cytoplasm. It localises to the cytoskeleton. Functionally, tubulin is the major constituent of microtubules, a cylinder consisting of laterally associated linear protofilaments composed of alpha- and beta-tubulin heterodimers. Microtubules grow by the addition of GTP-tubulin dimers to the microtubule end, where a stabilizing cap forms. Below the cap, tubulin dimers are in GDP-bound state, owing to GTPase activity of alpha-tubulin. The chain is Tubulin beta-1 chain from Homarus americanus (American lobster).